We begin with the raw amino-acid sequence, 141 residues long: Large ribosomal subunit protein uL11 (141 aa).

This sequence belongs to the universal ribosomal protein uL11 family. In terms of assembly, part of the ribosomal stalk of the 50S ribosomal subunit. Interacts with L10 and the large rRNA to form the base of the stalk. L10 forms an elongated spine to which L12 dimers bind in a sequential fashion forming a multimeric L10(L12)X complex. Post-translationally, one or more lysine residues are methylated.

Functionally, forms part of the ribosomal stalk which helps the ribosome interact with GTP-bound translation factors. The polypeptide is Large ribosomal subunit protein uL11 (Streptococcus sanguinis (strain SK36)).